The sequence spans 777 residues: Subtilisin-like protease SBT3.3 (777 aa).

Positions 1–24 are cleaved as a signal peptide; the sequence is MRSFRSSILLVLLSLITVLNATRA. A propeptide spans 25-111 (removed in mature form); sequence RSETESKVHI…VIPDGFHELA (87 aa). The 78-residue stretch at 32-109 folds into the Inhibitor I9 domain; that stretch reads VHIVYLGEKK…VHVIPDGFHE (78 aa). In terms of domain architecture, Peptidase S8 spans 115-624; that stretch reads TWEYLGLSSA…GGIVNPEKAA (510 aa). Asn131 carries N-linked (GlcNAc...) asparagine glycosylation. Asp145 acts as the Charge relay system in catalysis. An N-linked (GlcNAc...) asparagine glycan is attached at Asn204. The active-site Charge relay system is the His220. Asn235, Asn397, Asn412, Asn508, and Asn540 each carry an N-linked (GlcNAc...) asparagine glycan. Residues 403–481 form the PA domain; the sequence is VCESLNLNPN…ELGTDILSYI (79 aa). Catalysis depends on Ser555, which acts as the Charge relay system. A glycan (N-linked (GlcNAc...) asparagine) is linked at Asn647.

The protein belongs to the peptidase S8 family.

It localises to the secreted. Its subcellular location is the extracellular space. It is found in the extracellular matrix. Its function is as follows. Serine protease that plays a role in the control of the establishment of immune priming and systemic induced resistance. In Arabidopsis thaliana (Mouse-ear cress), this protein is Subtilisin-like protease SBT3.3.